The sequence spans 223 residues: MSKDVIEYSKLFAKLVNTNDDTKLDDTIASFLYYMFPRELFIRAISLLESSDMFIYILDRVHNKEGNEHTSLIDVLVDEFYKGSSNSLLEYRLIVKDTNDGAPPILVDIAHWFCSCEEFCKYFHEALEKTDEKEELHDVLINEVDDHLQFSDDRFAQLDPHSLSKQWYFKFDKVCCSHLLAFSILLRSSINVLKFFTVNSNKVFVIAIDNIDEWLNLHINIVE.

This sequence belongs to the SHU2 family. In terms of assembly, component of the SHU complex composed of at least CSM2, PSY3, SHU1 and SHU2.

It is found in the nucleus. Functionally, plays a role in a RAD51/RAD54-dependent homologous recombination repair (HRR) pathway to repair MMS-induced lesions during S-phase. Required for error-free repair of spontaneous and induced DNA lesions to protect the genome from mutation. In Saccharomyces cerevisiae (strain ATCC 204508 / S288c) (Baker's yeast), this protein is Suppressor of hydroxyurea sensitivity protein 2 (SHU2).